Here is a 695-residue protein sequence, read N- to C-terminus: FMR1-interacting protein NUFIP2 (695 aa).

The interval 1–100 (MEEKPGQPQP…KTGYGELNGN (100 aa)) is disordered. 2 stretches are compositionally biased toward basic residues: residues 11 to 23 (QHHHSHHHPHHHP) and 30 to 53 (PHHHHHYYFYNHSHNHHHHHHHQQ). A Glycyl lysine isopeptide (Lys-Gly) (interchain with G-Cter in SUMO2) cross-link involves residue Lys78. At Thr87 the chain carries Phosphothreonine. A Glycyl lysine isopeptide (Lys-Gly) (interchain with G-Cter in SUMO2) cross-link involves residue Lys109. Phosphoserine is present on residues Ser112 and Ser113. Residues Lys136, Lys146, Lys157, and Lys171 each participate in a glycyl lysine isopeptide (Lys-Gly) (interchain with G-Cter in SUMO2) cross-link. Disordered regions lie at residues 155–189 (IQKNSMDKKNGKSYENKSGENQSVDKSDTIPIPNG), 204–234 (GKGADNDGSGSESGYTTPKKRKARRNSAKGC), 261–341 (FKPD…KPPP), and 369–402 (TIQNSSVSPTSSSSSSSSTGETQTQSSSRLSQVP). A compositionally biased stretch (basic and acidic residues) spans 159-182 (SMDKKNGKSYENKSGENQSVDKSD). Residues Ser212 and Ser214 each carry the phosphoserine modification. Tyr218 carries the post-translational modification Phosphotyrosine. Phosphothreonine occurs at positions 219 and 220. Residues 221–230 (PKKRKARRNS) are compositionally biased toward basic residues. Over residues 261–275 (FKPDYSEQKGNRVDG) the composition is skewed to basic and acidic residues. Glycyl lysine isopeptide (Lys-Gly) (interchain with G-Cter in SUMO2) cross-links involve residues Lys262 and Lys281. Arg291 is subject to Omega-N-methylarginine. Lys293 is covalently cross-linked (Glycyl lysine isopeptide (Lys-Gly) (interchain with G-Cter in SUMO2)). Ser304 carries the phosphoserine modification. Lys307 participates in a covalent cross-link: Glycyl lysine isopeptide (Lys-Gly) (interchain with G-Cter in SUMO2). Positions 373 to 396 (SSVSPTSSSSSSSSTGETQTQSSS) are enriched in low complexity. Ser376 is modified (phosphoserine). Phosphothreonine is present on Thr571. Phosphoserine occurs at positions 572, 592, 608, and 629. Phosphothreonine is present on Thr633. Phosphoserine occurs at positions 637, 652, 655, and 692.

As to quaternary structure, interacts with FMR1 (via N-terminus). Interacts with DDX6.

Its subcellular location is the nucleus. It is found in the cytoplasm. The protein resides in the stress granule. Its function is as follows. Binds RNA. The chain is FMR1-interacting protein NUFIP2 from Homo sapiens (Human).